We begin with the raw amino-acid sequence, 100 residues long: Small ribosomal subunit protein bS20 (100 aa).

The protein belongs to the bacterial ribosomal protein bS20 family.

Its function is as follows. Binds directly to 16S ribosomal RNA. The chain is Small ribosomal subunit protein bS20 from Prochlorococcus marinus (strain MIT 9211).